Here is a 414-residue protein sequence, read N- to C-terminus: Histidine--tRNA ligase (414 aa).

Belongs to the class-II aminoacyl-tRNA synthetase family. As to quaternary structure, homodimer.

The protein localises to the cytoplasm. It catalyses the reaction tRNA(His) + L-histidine + ATP = L-histidyl-tRNA(His) + AMP + diphosphate + H(+). In Synechococcus sp. (strain RCC307), this protein is Histidine--tRNA ligase.